Consider the following 620-residue polypeptide: Guanylate-binding protein 3 (620 aa).

The segment at 1-304 is GTPase domain (Globular); the sequence is MEAPICLVEN…NAINSGTVPC (304 aa). The GB1/RHD3-type G domain occupies 29–271; sequence AQPLVVVAIV…FCSYIFTNGK (243 aa). Residues 39 to 46, 61 to 63, and 91 to 95 each bind GTP; these read GLYRTGKS, LGS, and DTEGL. Coiled coils occupy residues 375 to 411 and 477 to 582; these read KKLV…SESL and DGER…TRRK.

Belongs to the TRAFAC class dynamin-like GTPase superfamily. GB1/RHD3 GTPase family. GB1 subfamily. In terms of assembly, heterodimer with other family members, including GBP1, GBP2 and GBP5. Dimerization regulates subcellular location. As to expression, brain, lung, heart, spleen, kidney, liver and intestine.

It localises to the cytoplasm. It is found in the perinuclear region. The protein localises to the golgi apparatus membrane. The catalysed reaction is GTP + H2O = GDP + phosphate + H(+). Functionally, interferon (IFN)-inducible GTPase that plays important roles in innate immunity against a diverse range of bacterial, viral and protozoan pathogens. Hydrolyzes GTP very efficiently; GDP rather than GMP is the major reaction product. Following infection, recruited to the pathogen-containing vacuoles or vacuole-escaped bacteria and acts as a positive regulator of inflammasome assembly by promoting the release of inflammasome ligands from bacteria. Acts by promoting lysis of pathogen-containing vacuoles, releasing pathogens into the cytosol. Following pathogen release in the cytosol, promotes recruitment of proteins that mediate bacterial cytolysis, such as Gm12250/Irgb10: this liberates ligands that are detected by inflammasomes, such as lipopolysaccharide (LPS) that activates the non-canonical CASP4/CASP11 inflammasome or double-stranded DNA (dsDNA) that activates the AIM2 inflammasome. May play a role in erythroid differentiation. This Mus musculus (Mouse) protein is Guanylate-binding protein 3.